A 450-amino-acid chain; its full sequence is Dol-P-Glc:Glc(2)Man(9)GlcNAc(2)-PP-Dol alpha-1,2-glucosyltransferase (450 aa).

The helical transmembrane segment at 12–32 (ISIISKYVAIVIFLIFVIIMF) threads the bilayer. Asparagine 34 carries N-linked (GlcNAc...) asparagine glycosylation. 4 helical membrane-spanning segments follow: residues 158-178 (YFLF…LGLI), 190-210 (ALVG…IAFI), 243-263 (LLGY…NGGI), and 273-293 (IELH…FTIP). N-linked (GlcNAc...) asparagine glycosylation is present at asparagine 297. Helical transmembrane passes span 312-332 (IILN…FTIV), 357-377 (LKPL…SSLI), 384-404 (FIGI…SPLF), and 429-449 (FIWL…KGII).

The protein belongs to the ALG10 glucosyltransferase family.

The protein resides in the endoplasmic reticulum membrane. The catalysed reaction is an alpha-D-Glc-(1-&gt;3)-alpha-D-Glc-(1-&gt;3)-alpha-D-Man-(1-&gt;2)-alpha-D-Man-(1-&gt;2)-alpha-D-Man-(1-&gt;3)-[alpha-D-Man-(1-&gt;2)-alpha-D-Man-(1-&gt;3)-[alpha-D-Man-(1-&gt;2)-alpha-D-Man-(1-&gt;6)]-alpha-D-Man-(1-&gt;6)]-beta-D-Man-(1-&gt;4)-beta-D-GlcNAc-(1-&gt;4)-alpha-D-GlcNAc-diphospho-di-trans,poly-cis-dolichol + a di-trans,poly-cis-dolichyl beta-D-glucosyl phosphate = a alpha-D-Glc-(1-&gt;2)-alpha-D-Glc-(1-&gt;3)-alpha-D-Glc-(1-&gt;3)-alpha-D-Man-(1-&gt;2)-alpha-D-Man-(1-&gt;2)-alpha-D-Man-(1-&gt;3)-[alpha-D-Man-(1-&gt;2)-alpha-D-Man-(1-&gt;3)-[alpha-D-Man-(1-&gt;2)-alpha-D-Man-(1-&gt;6)]-alpha-D-Man-(1-&gt;6)]-beta-D-Man-(1-&gt;4)-beta-D-GlcNAc-(1-&gt;4)-alpha-D-GlcNAc-diphospho-di-trans,poly-cis-dolichol + a di-trans,poly-cis-dolichyl phosphate + H(+). Its pathway is protein modification; protein glycosylation. Functionally, dol-P-Glc:Glc(2)Man(9)GlcNAc(2)-PP-Dol alpha-1,2-glucosyltransferase that operates in the biosynthetic pathway of dolichol-linked oligosaccharides, the glycan precursors employed in protein asparagine (N)-glycosylation. The assembly of dolichol-linked oligosaccharides begins on the cytosolic side of the endoplasmic reticulum membrane and finishes in its lumen. The sequential addition of sugars to dolichol pyrophosphate produces dolichol-linked oligosaccharides containing fourteen sugars, including two GlcNAcs, nine mannoses and three glucoses. Once assembled, the oligosaccharide is transferred from the lipid to nascent proteins by oligosaccharyltransferases. In the lumen of the endoplasmic reticulum, adds the third and last glucose residue from dolichyl phosphate glucose (Dol-P-Glc) onto the lipid-linked oligosaccharide intermediate Glc(2)Man(9)GlcNAc(2)-PP-Dol to produce Glc(3)Man(9)GlcNAc(2)-PP-Dol. This chain is Dol-P-Glc:Glc(2)Man(9)GlcNAc(2)-PP-Dol alpha-1,2-glucosyltransferase (DIE2), found in Candida albicans (strain SC5314 / ATCC MYA-2876) (Yeast).